Consider the following 89-residue polypeptide: UPF0223 protein BCE_4008 (89 aa).

The protein belongs to the UPF0223 family.

This chain is UPF0223 protein BCE_4008, found in Bacillus cereus (strain ATCC 10987 / NRS 248).